We begin with the raw amino-acid sequence, 150 residues long: Large ribosomal subunit protein bL17 (150 aa).

The segment at 126-150 (DRAKRREERLKAQREGRDHEEETDE) is disordered.

It belongs to the bacterial ribosomal protein bL17 family. In terms of assembly, part of the 50S ribosomal subunit. Contacts protein L32.

In Solibacter usitatus (strain Ellin6076), this protein is Large ribosomal subunit protein bL17.